A 161-amino-acid polypeptide reads, in one-letter code: ATP synthase subunit b (161 aa).

Residues valine 2 to leucine 22 traverse the membrane as a helical segment.

The protein belongs to the ATPase B chain family. F-type ATPases have 2 components, F(1) - the catalytic core - and F(0) - the membrane proton channel. F(1) has five subunits: alpha(3), beta(3), gamma(1), delta(1), epsilon(1). F(0) has three main subunits: a(1), b(2) and c(10-14). The alpha and beta chains form an alternating ring which encloses part of the gamma chain. F(1) is attached to F(0) by a central stalk formed by the gamma and epsilon chains, while a peripheral stalk is formed by the delta and b chains.

The protein localises to the cell membrane. Functionally, f(1)F(0) ATP synthase produces ATP from ADP in the presence of a proton or sodium gradient. F-type ATPases consist of two structural domains, F(1) containing the extramembraneous catalytic core and F(0) containing the membrane proton channel, linked together by a central stalk and a peripheral stalk. During catalysis, ATP synthesis in the catalytic domain of F(1) is coupled via a rotary mechanism of the central stalk subunits to proton translocation. Component of the F(0) channel, it forms part of the peripheral stalk, linking F(1) to F(0). In Shouchella clausii (strain KSM-K16) (Alkalihalobacillus clausii), this protein is ATP synthase subunit b.